Reading from the N-terminus, the 291-residue chain is Pyridoxal 5'-phosphate synthase subunit PdxS (291 aa).

Asp-23 provides a ligand contact to D-ribose 5-phosphate. The active-site Schiff-base intermediate with D-ribose 5-phosphate is the Lys-80. Gly-152 provides a ligand contact to D-ribose 5-phosphate. Arg-164 is a D-glyceraldehyde 3-phosphate binding site. D-ribose 5-phosphate is bound by residues Gly-213 and 234 to 235; that span reads GS.

This sequence belongs to the PdxS/SNZ family. In the presence of PdxT, forms a dodecamer of heterodimers.

The catalysed reaction is aldehydo-D-ribose 5-phosphate + D-glyceraldehyde 3-phosphate + L-glutamine = pyridoxal 5'-phosphate + L-glutamate + phosphate + 3 H2O + H(+). It functions in the pathway cofactor biosynthesis; pyridoxal 5'-phosphate biosynthesis. Its function is as follows. Catalyzes the formation of pyridoxal 5'-phosphate from ribose 5-phosphate (RBP), glyceraldehyde 3-phosphate (G3P) and ammonia. The ammonia is provided by the PdxT subunit. Can also use ribulose 5-phosphate and dihydroxyacetone phosphate as substrates, resulting from enzyme-catalyzed isomerization of RBP and G3P, respectively. This Bifidobacterium adolescentis (strain ATCC 15703 / DSM 20083 / NCTC 11814 / E194a) protein is Pyridoxal 5'-phosphate synthase subunit PdxS.